A 492-amino-acid chain; its full sequence is Peptidyl-prolyl cis-trans isomerase-like 4 (492 aa).

In terms of domain architecture, PPIase cyclophilin-type spans 1–161 (MAVLLETTLG…QDIRINHTVI (161 aa)). The segment at 167–188 (DDPPDLLIPDRSPEPTKEQLDS) is disordered. Basic and acidic residues predominate over residues 177–187 (RSPEPTKEQLD). The residue at position 178 (serine 178) is a Phosphoserine. Threonine 182 carries the phosphothreonine modification. Residues lysine 201, lysine 212, and lysine 218 each participate in a glycyl lysine isopeptide (Lys-Gly) (interchain with G-Cter in SUMO2) cross-link. An RRM domain is found at 240-318 (NVLFVCKLNP…RRIHVDFSQS (79 aa)). Residues lysine 321 and lysine 362 each participate in a glycyl lysine isopeptide (Lys-Gly) (interchain with G-Cter in SUMO2) cross-link. 2 disordered regions span residues 368-409 (DEQG…NPNQ) and 423-492 (EESC…SKYR). Basic residues predominate over residues 377–390 (SHSHTSKKHKKKTR). Serine 393 is subject to Phosphoserine. Lysine 405 is covalently cross-linked (Glycyl lysine isopeptide (Lys-Gly) (interchain with G-Cter in SUMO2)). Residues 426–436 (CWEKQKNEKRD) show a composition bias toward basic and acidic residues. Lysine 460 is covalently cross-linked (Glycyl lysine isopeptide (Lys-Gly) (interchain with G-Cter in SUMO2)). Residue serine 471 is modified to Phosphoserine. The span at 473–485 (KRDRSRSPKKSKA) shows a compositional bias: basic residues.

The protein belongs to the cyclophilin-type PPIase family. PPIL4 subfamily.

It localises to the nucleus. It carries out the reaction [protein]-peptidylproline (omega=180) = [protein]-peptidylproline (omega=0). Its function is as follows. PPIases accelerate the folding of proteins. It catalyzes the cis-trans isomerization of proline imidic peptide bonds in oligopeptides. This chain is Peptidyl-prolyl cis-trans isomerase-like 4 (Ppil4), found in Mus musculus (Mouse).